The chain runs to 220 residues: Putative vesicle-associated membrane protein 726 (220 aa).

Residues 1–196 lie on the Cytoplasmic side of the membrane; it reads MGQQSLIYSF…LWFENMKIKL (196 aa). One can recognise a Longin domain in the interval 10 to 114; it reads FVARGTVILA…SLNKEFGSKL (105 aa). Residues 130 to 190 form the v-SNARE coiled-coil homology domain; that stretch reads KLSKVKAQVT…TKMKRKLWFE (61 aa). A helical; Anchor for type IV membrane protein transmembrane segment spans residues 197 to 217; sequence IVFGIIVALILIIILSVCHGF. The Vesicular portion of the chain corresponds to 218 to 220; it reads KCT.

Belongs to the synaptobrevin family. Expressed in flowers, leaves, stems and roots.

The protein resides in the cell membrane. The protein localises to the early endosome membrane. Involved in the targeting and/or fusion of transport vesicles to their target membrane. The sequence is that of Putative vesicle-associated membrane protein 726 (VAMP726) from Arabidopsis thaliana (Mouse-ear cress).